A 925-amino-acid chain; its full sequence is MVTSLVRKIFGSRNERIVKRLGKTVARINELEAELQSLDDEALKARTGQLRERLAGGESLEALLPEAFAVTREAGRRVMGMRHFDVQLIGGMVLDSGRIAEMRTGEGKTLVATLAAYLNALSGKGVHVVTVNDYLARRDAAWMGRLYHALGLSVGVINSSGGAGPDSASYLYDPGFHAEGGIAHLRPVTRREAYAADITYGTNNEFGFDYLRDNMAFRLEDRVQRELNFAIVDEVDSILIDEARTPLIISGPAGESAEMYERMNRIVPKLTPQEEEEGPGDYSVDEKMKQVFLTEDGQEKAEQLMRDAGLLAEGQGLYDAGSIALLHHLNAALRAHILFHKDVDYLVRDGQILIIDEFTGRIMAGRRWSEGLHQAIEAKEGVPIQRENQTLASITFQNYFRLYEKLSGMTGTADTEAYEFQQIYGLEVVVIPTNRPMVRNDMQDLVYMTQKEKFEAIIKEIKYCQEKRQPVLVGTASVETSEYLSGLLKKAKIAHEVLNAKQHEREAHVVEQAGRPGAVTLATNMAGRGTDIVLGGSLEAELATLGDNPKPADVDRVKADWQKRHDEVLANGGLHIIGSERHESRRIDNQLRGRAGRQGDPGSSRFFLSLEDNLMRIFASDRVKSLMQRLGMQEGEAIENAWVTKAIENAQRKVEAHNFDIRKNLLEYDDVANDQRKVVYEQRRELLETEDISETLEAVRRDVLEGVISQYIPQGSIEEQWDVPGLTHVLEQDFGLVLDIAGWLEREDDLHEETLRERIHQHAAEAYQVKEDKVGAETMRRIEKDVMLQVLDSHWKEHLAAMDYLRQGIGLRGYAQRNPKQEYKREAFEMFEALLTRIKHDVTALLMRVQVRSPEDAEALERQQRAAAGADMRFQHSQPESVLHKPEAGEGEEAQPFRRETPKVGRNDPCWCGSGKKFKHCHGKL.

ATP contacts are provided by residues Gln87, 105–109 (GEGKT), and Asp531. The interval 867-909 (AAGADMRFQHSQPESVLHKPEAGEGEEAQPFRRETPKVGRNDP) is disordered. Residues 895 to 906 (QPFRRETPKVGR) show a composition bias toward basic and acidic residues. Zn(2+) is bound by residues Cys910, Cys912, Cys921, and His922.

Belongs to the SecA family. Monomer and homodimer. Part of the essential Sec protein translocation apparatus which comprises SecA, SecYEG and auxiliary proteins SecDF-YajC and YidC. It depends on Zn(2+) as a cofactor.

The protein localises to the cell inner membrane. It localises to the cytoplasm. It catalyses the reaction ATP + H2O + cellular proteinSide 1 = ADP + phosphate + cellular proteinSide 2.. Part of the Sec protein translocase complex. Interacts with the SecYEG preprotein conducting channel. Has a central role in coupling the hydrolysis of ATP to the transfer of proteins into and across the cell membrane, serving both as a receptor for the preprotein-SecB complex and as an ATP-driven molecular motor driving the stepwise translocation of polypeptide chains across the membrane. The chain is Protein translocase subunit SecA from Thioalkalivibrio sulfidiphilus (strain HL-EbGR7).